The chain runs to 160 residues: Nucleotide-binding protein Patl_4311 (160 aa).

It belongs to the YajQ family.

Functionally, nucleotide-binding protein. The protein is Nucleotide-binding protein Patl_4311 of Pseudoalteromonas atlantica (strain T6c / ATCC BAA-1087).